We begin with the raw amino-acid sequence, 784 residues long: 1-phosphatidylinositol 4,5-bisphosphate phosphodiesterase delta-3-A (784 aa).

The tract at residues 1-25 is disordered; sequence MLGRKKNPETVQTESKSVESKTHDP. The span at 16–25 shows a compositional bias: basic and acidic residues; the sequence is KSVESKTHDP. The 112-residue stretch at 38-149 folds into the PH domain; sequence LLMLQGSKMM…WVRGIRTLKD (112 aa). Residues 48–78 are substrate binding; it reads KVRSQRWRKDRRLKLLEDCVTVWCESSKTSR. EF-hand domains are found at residues 159–194, 195–230, and 227–262; these read KLDH…INID, LNEQ…MMRR, and MMRR…QGED. Ca(2+)-binding residues include D172, N174, D176, K178, E183, D208, S210, D212, R214, and E219. The 146-residue stretch at 313–458 folds into the PI-PLC X-box domain; it reads QDMSKPLAHY…LKGRILLKGK (146 aa). Residue H328 is part of the active site. Ca(2+) contacts are provided by N329, E358, and D360. Residue H373 is part of the active site. E407 contacts Ca(2+). K456 and K458 together coordinate substrate. Positions 473 to 498 are disordered; the sequence is FTNSSDEESVAGGNKKESKKDLARSA. Basic and acidic residues predominate over residues 486–495; that stretch reads NKKESKKDLA. One can recognise a PI-PLC Y-box domain in the interval 506–621; the sequence is LSDLVVYCQS…GYVLKPEFLC (116 aa). The substrate site is built by S534 and R561. Residues 621–750 form the C2 domain; the sequence is CDPKSDFDPE…TGYRHVHLLK (130 aa). I664, D666, N690, D719, and D721 together coordinate Ca(2+).

Ca(2+) serves as cofactor.

The protein localises to the membrane. The protein resides in the cytoplasm. It is found in the cleavage furrow. The enzyme catalyses a 1,2-diacyl-sn-glycero-3-phospho-(1D-myo-inositol-4,5-bisphosphate) + H2O = 1D-myo-inositol 1,4,5-trisphosphate + a 1,2-diacyl-sn-glycerol + H(+). In terms of biological role, hydrolyzes the phosphatidylinositol 4,5-bisphosphate (PIP2) to generate 2 second messenger molecules diacylglycerol (DAG) and inositol 1,4,5-trisphosphate (IP3). DAG mediates the activation of protein kinase C (PKC), while IP3 releases Ca(2+) from intracellular stores. This Danio rerio (Zebrafish) protein is 1-phosphatidylinositol 4,5-bisphosphate phosphodiesterase delta-3-A (plcd3a).